Here is a 91-residue protein sequence, read N- to C-terminus: Cell division protein ZapA (91 aa).

Positions L58–D91 form a coiled coil.

Belongs to the ZapA family. Type 2 subfamily. In terms of assembly, homodimer. Interacts with FtsZ.

It localises to the cytoplasm. Activator of cell division through the inhibition of FtsZ GTPase activity, therefore promoting FtsZ assembly into bundles of protofilaments necessary for the formation of the division Z ring. It is recruited early at mid-cell but it is not essential for cell division. This Geobacillus kaustophilus (strain HTA426) protein is Cell division protein ZapA.